We begin with the raw amino-acid sequence, 227 residues long: Ribonuclease 3 (227 aa).

Positions 4–133 (FETLEKLLGY…LIAAIYLDSN (130 aa)) constitute an RNase III domain. Glu46 contributes to the Mg(2+) binding site. Residue Asp50 is part of the active site. Residues Asn119 and Glu122 each coordinate Mg(2+). The active site involves Glu122. A DRBM domain is found at 158–226 (DPKTALQEWA…ARDLLHRLQD (69 aa)).

Belongs to the ribonuclease III family. Homodimer. Mg(2+) is required as a cofactor.

The protein localises to the cytoplasm. The enzyme catalyses Endonucleolytic cleavage to 5'-phosphomonoester.. Its function is as follows. Digests double-stranded RNA. Involved in the processing of primary rRNA transcript to yield the immediate precursors to the large and small rRNAs (23S and 16S). Processes some mRNAs, and tRNAs when they are encoded in the rRNA operon. Processes pre-crRNA and tracrRNA of type II CRISPR loci if present in the organism. The sequence is that of Ribonuclease 3 from Rickettsia akari (strain Hartford).